The chain runs to 400 residues: Trans-enoyl reductase ucsL (400 aa).

Position 50-53 (50-53 (TDHK)) interacts with NADP(+). Position 145–152 (145–152 (SVHGSVAL)) interacts with substrate. NADP(+)-binding positions include 204–207 (STAC), 227–230 (SPRN), Y245, and 292–293 (LE). A substrate-binding site is contributed by 313-317 (GPVMF). 389-390 (VS) contacts NADP(+).

The protein belongs to the zinc-containing alcohol dehydrogenase family. As to quaternary structure, monomer.

It functions in the pathway mycotoxin biosynthesis. Trans-enoyl reductase; part of the gene cluster that mediates the biosynthesis of UCS1025A, a member of the pyrrolizidinone family that acts as a strong telomerase inhibitor and displays potent antibacterial and antitumor properties. These compounds share a hemiaminal-containing pyrrolizidinone core fused with a gamma-lactone, giving a furopyrrolizidine that is connected to a decalin fragment. The polyketide synthase module (PKS) of the PKS-NRPS ucsA is responsible for the synthesis of the polyketide backbone via the condensation of an acetyl-CoA starter unit with 6 malonyl-CoA units. The downstream nonribosomal peptide synthetase (NRPS) module then amidates the carboxyl end of the polyketide with a 2S,3S-methylproline derived from L-isoleucine by the 2-oxoglutarate-dependent dioxygenase ucsF which converts L-isoleucine to (4S,5S)-4-methylpyrroline-5-carboxylate that is further converted to 2S,3S-methylproline by the pyrroline-5-carboxylate reductase ucsG. Reductive release of the completed aminoacyl polyketide from the assembly line can form the 3-pyrrolin-2-one structure via an intramolecular Knoevenagel reaction. Because ucsA lacks a designated enoylreductase (ER) domain, the required activity is provided the enoyl reductase ucsL. This keto acyclic precursor is the substrate of the Diels-Alderase ucsH, that catalyzes the Diels-Alder cycloaddition. Oxidation of the 3S-methyl group to a carboxylate by the cytochrome P450 monooxygenase ucsK allows an oxa-Michael cyclization that might involve the reductase/dehydrogenase ucsI and which furnishes the furopyrrolizidine. The oxidase ucsJ likely plays a critical role in stereoselective reduction of the C5-C6 double bond to afford the required R-configured carboxylate group. Further enolization and oxidation at C5 by an unidentified enzyme affords the last intermediate that can undergo oxa-Michael cyclization to yield UCS1025A. The chain is Trans-enoyl reductase ucsL from Acremonium sp.